Reading from the N-terminus, the 283-residue chain is Lysozyme-like protein 7 (283 aa).

A signal peptide spans 1-18 (MAHKSIVIFSVLAVLCHS). One can recognise a Ch-type lysozyme domain in the interval 53 to 273 (YAYALDIYVQ…AVEEDGKIYA (221 aa)).

The protein belongs to the glycosyl hydrolase 25 family. Expressed in intestine. Expressed in rectal gland cells and head neurons.

Its function is as follows. Plays a role in resistance to Gram-positive bacteria B.thuringiensis and M.nematophilum and Gram-negative bacteria S.boydii or S.flexneri infection and to fungus C.neoformans infection. Plays a role in susceptibility to Gram-negative bacterium S.typhimurium infection. In Caenorhabditis elegans, this protein is Lysozyme-like protein 7.